The primary structure comprises 576 residues: Sulfite reductase [NADPH] hemoprotein beta-component (576 aa).

4 residues coordinate [4Fe-4S] cluster: cysteine 439, cysteine 445, cysteine 485, and cysteine 489. Residue cysteine 489 participates in siroheme binding.

It belongs to the nitrite and sulfite reductase 4Fe-4S domain family. Alpha(8)-beta(8). The alpha component is a flavoprotein, the beta component is a hemoprotein. Siroheme serves as cofactor. [4Fe-4S] cluster is required as a cofactor.

The enzyme catalyses hydrogen sulfide + 3 NADP(+) + 3 H2O = sulfite + 3 NADPH + 4 H(+). The protein operates within sulfur metabolism; hydrogen sulfide biosynthesis; hydrogen sulfide from sulfite (NADPH route): step 1/1. Its function is as follows. Component of the sulfite reductase complex that catalyzes the 6-electron reduction of sulfite to sulfide. This is one of several activities required for the biosynthesis of L-cysteine from sulfate. In Aliivibrio salmonicida (strain LFI1238) (Vibrio salmonicida (strain LFI1238)), this protein is Sulfite reductase [NADPH] hemoprotein beta-component.